Reading from the N-terminus, the 458-residue chain is Elongation factor 1-alpha (458 aa).

G2 carries the n,N,N-trimethylglycine modification. Position 3 is an N6,N6-dimethyllysine; alternate (K3). K3 is modified (N6-methyllysine; alternate). Residues K5–S240 enclose the tr-type G domain. The segment at G14–S21 is G1. G14 to S21 is a GTP binding site. The residue at position 30 (K30) is an N6-methyllysine. The segment at G70–D74 is G2. K79 bears the N6,N6,N6-trimethyllysine mark. The G3 stretch occupies residues D91–G94. Residues D91–H95 and N153–D156 contribute to the GTP site. Residues N153 to D156 are G4. Residues S192 to W194 are G5. The residue at position 316 (K316) is an N6,N6-dimethyllysine; alternate. At K316 the chain carries N6-methyllysine; alternate. N6-methyllysine is present on K390.

It belongs to the TRAFAC class translation factor GTPase superfamily. Classic translation factor GTPase family. EF-Tu/EF-1A subfamily.

The protein resides in the cytoplasm. This protein promotes the GTP-dependent binding of aminoacyl-tRNA to the A-site of ribosomes during protein biosynthesis. This chain is Elongation factor 1-alpha (TEF-1), found in Mucor circinelloides f. lusitanicus (Mucor racemosus var. lusitanicus).